Consider the following 126-residue polypeptide: Urease subunit beta (126 aa).

It belongs to the urease beta subunit family. In terms of assembly, heterotrimer of UreA (gamma), UreB (beta) and UreC (alpha) subunits. Three heterotrimers associate to form the active enzyme.

It localises to the cytoplasm. It carries out the reaction urea + 2 H2O + H(+) = hydrogencarbonate + 2 NH4(+). It participates in nitrogen metabolism; urea degradation; CO(2) and NH(3) from urea (urease route): step 1/1. This is Urease subunit beta from Sporosarcina pasteurii (Bacillus pasteurii).